A 376-amino-acid chain; its full sequence is MLNFELITTDGNARRGRVTLNHGVVETPIFMPVGTYGSVKAMSPLELNEIGAEIILGNTFHLWLRPGLDVVNTHEGLHRFIGWDKPILTDSGGFQVFSLGDLRKITEDGVTFASPVNGDKLFLSPEISMQIQRTLNSDIVMQFDECTPYEIEGRPATHEEAAKSMRMSLRWAKRSRDEFERLANPNALFGIVQGGMFEDLRDESLAGLSELDFHGFAIGGLSVGEPKEDMMRVLEHVAPRLPADKPHYLMGVGTPEDLVAGVAAGVDMFDCVMPTRNARNGWLFTRYGDVKIRNAAHRNDPRPLDESCACYTCRNFSRAYLHHLHRVGEILGARLNTIHNLHYYLQLMREVRESIEQHRFSDFRRQFASDRARGTR.

Asp-90 serves as the catalytic Proton acceptor. Substrate is bound by residues Asp-90–Phe-94, Asp-144, Gln-193, and Gly-220. The interval Gly-251–Asp-257 is RNA binding. The Nucleophile role is filled by Asp-270. Residues Thr-275–Arg-279 form an RNA binding; important for wobble base 34 recognition region. Zn(2+)-binding residues include Cys-308, Cys-310, Cys-313, and His-339.

Belongs to the queuine tRNA-ribosyltransferase family. As to quaternary structure, homodimer. Within each dimer, one monomer is responsible for RNA recognition and catalysis, while the other monomer binds to the replacement base PreQ1. Zn(2+) serves as cofactor.

It catalyses the reaction 7-aminomethyl-7-carbaguanine + guanosine(34) in tRNA = 7-aminomethyl-7-carbaguanosine(34) in tRNA + guanine. It functions in the pathway tRNA modification; tRNA-queuosine biosynthesis. Functionally, catalyzes the base-exchange of a guanine (G) residue with the queuine precursor 7-aminomethyl-7-deazaguanine (PreQ1) at position 34 (anticodon wobble position) in tRNAs with GU(N) anticodons (tRNA-Asp, -Asn, -His and -Tyr). Catalysis occurs through a double-displacement mechanism. The nucleophile active site attacks the C1' of nucleotide 34 to detach the guanine base from the RNA, forming a covalent enzyme-RNA intermediate. The proton acceptor active site deprotonates the incoming PreQ1, allowing a nucleophilic attack on the C1' of the ribose to form the product. After dissociation, two additional enzymatic reactions on the tRNA convert PreQ1 to queuine (Q), resulting in the hypermodified nucleoside queuosine (7-(((4,5-cis-dihydroxy-2-cyclopenten-1-yl)amino)methyl)-7-deazaguanosine). This is Queuine tRNA-ribosyltransferase from Cupriavidus pinatubonensis (strain JMP 134 / LMG 1197) (Cupriavidus necator (strain JMP 134)).